The chain runs to 141 residues: Large ribosomal subunit protein uL11 (141 aa).

Belongs to the universal ribosomal protein uL11 family. In terms of assembly, part of the ribosomal stalk of the 50S ribosomal subunit. Interacts with L10 and the large rRNA to form the base of the stalk. L10 forms an elongated spine to which L12 dimers bind in a sequential fashion forming a multimeric L10(L12)X complex. In terms of processing, one or more lysine residues are methylated.

Its function is as follows. Forms part of the ribosomal stalk which helps the ribosome interact with GTP-bound translation factors. The sequence is that of Large ribosomal subunit protein uL11 from Carboxydothermus hydrogenoformans (strain ATCC BAA-161 / DSM 6008 / Z-2901).